Here is a 60-residue protein sequence, read N- to C-terminus: Large ribosomal subunit protein bL33 (60 aa).

It belongs to the bacterial ribosomal protein bL33 family.

In Chlorobium phaeobacteroides (strain DSM 266 / SMG 266 / 2430), this protein is Large ribosomal subunit protein bL33.